We begin with the raw amino-acid sequence, 549 residues long: Hydroxylamine reductase (549 aa).

[2Fe-2S] cluster is bound by residues Cys-3, Cys-6, Cys-18, and Cys-25. Hybrid [4Fe-2O-2S] cluster-binding residues include His-248, Glu-272, Cys-316, Cys-404, Cys-432, Cys-457, Glu-491, and Lys-493. Residue Cys-404 is modified to Cysteine persulfide.

This sequence belongs to the HCP family. The cofactor is [2Fe-2S] cluster. Hybrid [4Fe-2O-2S] cluster serves as cofactor.

It localises to the cytoplasm. It catalyses the reaction A + NH4(+) + H2O = hydroxylamine + AH2 + H(+). In terms of biological role, catalyzes the reduction of hydroxylamine to form NH(3) and H(2)O. This Aeromonas hydrophila subsp. hydrophila (strain ATCC 7966 / DSM 30187 / BCRC 13018 / CCUG 14551 / JCM 1027 / KCTC 2358 / NCIMB 9240 / NCTC 8049) protein is Hydroxylamine reductase.